A 156-amino-acid chain; its full sequence is ATP synthase subunit b (156 aa).

The chain crosses the membrane as a helical span at residues 11–31 (AIAFVLFVLFCMKYVWPPIMA).

Belongs to the ATPase B chain family. F-type ATPases have 2 components, F(1) - the catalytic core - and F(0) - the membrane proton channel. F(1) has five subunits: alpha(3), beta(3), gamma(1), delta(1), epsilon(1). F(0) has three main subunits: a(1), b(2) and c(10-14). The alpha and beta chains form an alternating ring which encloses part of the gamma chain. F(1) is attached to F(0) by a central stalk formed by the gamma and epsilon chains, while a peripheral stalk is formed by the delta and b chains.

Its subcellular location is the cell inner membrane. F(1)F(0) ATP synthase produces ATP from ADP in the presence of a proton or sodium gradient. F-type ATPases consist of two structural domains, F(1) containing the extramembraneous catalytic core and F(0) containing the membrane proton channel, linked together by a central stalk and a peripheral stalk. During catalysis, ATP synthesis in the catalytic domain of F(1) is coupled via a rotary mechanism of the central stalk subunits to proton translocation. Its function is as follows. Component of the F(0) channel, it forms part of the peripheral stalk, linking F(1) to F(0). The chain is ATP synthase subunit b from Proteus mirabilis (strain HI4320).